The chain runs to 623 residues: Calnexin (623 aa).

The first 21 residues, 1 to 21 (MLNRKWSFVFLTFLLVISVNA), serve as a signal peptide directing secretion. Asp108 contacts Ca(2+). Cys151 and Cys185 are disulfide-bonded. An alpha-D-glucoside-binding residues include Tyr155, Lys157, Tyr176, and Asp183. N-linked (GlcNAc...) asparagine glycosylation is present at Asn202. The tract at residues 260–337 (SLTPPKEIFD…QKPQDWDEDM (78 aa)) is disordered. Residues 266–276 (EIFDETDLKPE) are compositionally biased toward basic and acidic residues. The segment at 267 to 400 (IFDETDLKPE…RLIDNPNYFE (134 aa)) is p domain (Extended arm). Tandem repeats lie at residues 269–281 (DETD…WDER), 286–298 (DETA…WDEN), 305–317 (DESA…WNEE), 324–336 (DPEA…WDED), and 339–349 (GSWEAPLIDNP). 2 4 X approximate repeats regions span residues 269 to 336 (DETD…WDED) and 339 to 396 (GSWE…IDNP). Acidic residues-rich tracts occupy residues 277–287 (DWDEREQIEDE) and 314–323 (WNEEENELIP). A disulfide bridge connects residues Cys351 and Cys357. 3 consecutive repeat copies span residues 358-368 (GTWKPPTIKNP), 372-382 (GKWVRPKIANP), and 386-396 (GKWSPRLIDNP). Residue Glu416 participates in an alpha-D-glucoside binding. Residue Asp427 coordinates Ca(2+). Residues 480–500 (LWAVYILCILLPLIAIGVFCF) traverse the membrane as a helical segment. The disordered stretch occupies residues 536 to 623 (IAEDEEDNQP…AKRRTARRGD (88 aa)). A compositionally biased stretch (acidic residues) spans 556-565 (IDEDEQDEVE). Residues 566 to 581 (QQPSSSKTASSESSSA) show a composition bias toward low complexity. Residues 614–623 (AKRRTARRGD) are compositionally biased toward basic residues.

The protein belongs to the calreticulin family. In terms of processing, glycosylation is important for its biological activity.

It is found in the endoplasmic reticulum membrane. The protein localises to the cytoplasm. Its subcellular location is the perinuclear region. The protein resides in the cytoplasmic vesicle. Its function is as follows. Calcium-binding protein that interacts with newly synthesized monoglucosylated glycoproteins in the endoplasmic reticulum. It may act in assisting protein assembly and/or in the retention within the ER of unassembled protein subunits. It seems to play a major role in the quality control apparatus of the ER by the retention of incorrectly folded proteins. Required for embryogenesis and larval development under heat and ER stress conditions. May be important for germ cell development. Involved in neuronal necrotic cell death. The protein is Calnexin of Caenorhabditis briggsae.